Consider the following 297-residue polypeptide: Glutamyl-Q tRNA(Asp) synthetase (297 aa).

L-glutamate-binding positions include 7–11 and E43; that span reads RFAPS. Residues 10–20 carry the 'HIGH' region motif; the sequence is PSPTGPLHFGS. Positions 99, 101, 122, and 126 each coordinate Zn(2+). Residues Y182 and R200 each coordinate L-glutamate. A 'KMSKS' region motif is present at residues 238–242; it reads KLSKQ. K241 contacts ATP.

This sequence belongs to the class-I aminoacyl-tRNA synthetase family. GluQ subfamily. Zn(2+) is required as a cofactor.

Functionally, catalyzes the tRNA-independent activation of glutamate in presence of ATP and the subsequent transfer of glutamate onto a tRNA(Asp). Glutamate is transferred on the 2-amino-5-(4,5-dihydroxy-2-cyclopenten-1-yl) moiety of the queuosine in the wobble position of the QUC anticodon. The chain is Glutamyl-Q tRNA(Asp) synthetase from Burkholderia pseudomallei (strain K96243).